The chain runs to 436 residues: tRNA modification GTPase MnmE (436 aa).

The (6S)-5-formyl-5,6,7,8-tetrahydrofolate site is built by Arg20, Glu77, and Lys117. The TrmE-type G domain occupies 214–360 (GLKIVIAGAP…FIKELESFCL (147 aa)). GTP contacts are provided by residues 224–229 (NSGKSS), 243–249 (MEEAGTT), and 268–271 (DTAG). Residues Ser228 and Thr249 each coordinate Mg(2+). Residue Lys436 participates in (6S)-5-formyl-5,6,7,8-tetrahydrofolate binding.

It belongs to the TRAFAC class TrmE-Era-EngA-EngB-Septin-like GTPase superfamily. TrmE GTPase family. Homodimer. Heterotetramer of two MnmE and two MnmG subunits. The cofactor is K(+).

It localises to the cytoplasm. Its function is as follows. Exhibits a very high intrinsic GTPase hydrolysis rate. Involved in the addition of a carboxymethylaminomethyl (cmnm) group at the wobble position (U34) of certain tRNAs, forming tRNA-cmnm(5)s(2)U34. In Bartonella quintana (strain Toulouse) (Rochalimaea quintana), this protein is tRNA modification GTPase MnmE.